Consider the following 224-residue polypeptide: Ribonuclease 3 (224 aa).

The RNase III domain occupies 5–127 (LERLCRRLNY…ILAAIYLDGG (123 aa)). Glu40 provides a ligand contact to Mg(2+). Asp44 is a catalytic residue. Positions 113 and 116 each coordinate Mg(2+). Residue Glu116 is part of the active site. The region spanning 154-224 (DAKTQLQEFL…AKAMLEQLQG (71 aa)) is the DRBM domain.

It belongs to the ribonuclease III family. In terms of assembly, homodimer. Mg(2+) serves as cofactor.

The protein resides in the cytoplasm. It catalyses the reaction Endonucleolytic cleavage to 5'-phosphomonoester.. Functionally, digests double-stranded RNA. Involved in the processing of primary rRNA transcript to yield the immediate precursors to the large and small rRNAs (23S and 16S). Processes some mRNAs, and tRNAs when they are encoded in the rRNA operon. Processes pre-crRNA and tracrRNA of type II CRISPR loci if present in the organism. The polypeptide is Ribonuclease 3 (Legionella pneumophila (strain Lens)).